We begin with the raw amino-acid sequence, 400 residues long: Phosphoglycerate kinase (400 aa).

Substrate contacts are provided by residues 22–24 (DFN), Arg-38, 61–64 (HLGR), Arg-119, and Arg-152. Residues Lys-205, Gly-296, Glu-327, and 353–356 (GGDT) contribute to the ATP site.

It belongs to the phosphoglycerate kinase family. In terms of assembly, monomer.

The protein localises to the cytoplasm. The catalysed reaction is (2R)-3-phosphoglycerate + ATP = (2R)-3-phospho-glyceroyl phosphate + ADP. It functions in the pathway carbohydrate degradation; glycolysis; pyruvate from D-glyceraldehyde 3-phosphate: step 2/5. This chain is Phosphoglycerate kinase, found in Campylobacter jejuni subsp. jejuni serotype O:2 (strain ATCC 700819 / NCTC 11168).